The sequence spans 297 residues: MTMESREMDCYLRRLKQELMSMKEVGDGLQDQMNCMMGALQELKLLQVQTALEQLEISGGGPVPGSPEGPRTQCEHPCWEGGRGPARPTVCSPSSQPSLGSSTKFPSHRSVCGRDLAPLPRTQPHQSCAQQGPERVEPDDWTSTLMSRGRNRQPLVLGDNVFADLVGNWLDLPELEKGGEKGETGGAREPKGEKGQPQELGRRFALTANIFKKFLRSVRPDRDRLLKEKPGWVTPMVPESRTGRSQKVKKRSLSKGSGHFPFPGTGEHRRGENPPTSCPKALEHSPSGFDINTAVWV.

Disordered stretches follow at residues 82–109 (GRGP…PSHR), 175–200 (LEKG…PQEL), and 234–285 (TPMV…LEHS). A compositionally biased stretch (low complexity) spans 92-102 (SPSSQPSLGSS). Residues 137 to 180 (EPDDWTSTLMSRGRNRQPLVLGDNVFADLVGNWLDLPELEKGGE) are inka box. Positions 244–253 (RSQKVKKRSL) are enriched in basic residues.

It belongs to the INKA family. In terms of assembly, interacts with PAK4.

Its subcellular location is the nucleus. In terms of biological role, inhibitor of the serine/threonine-protein kinase PAK4. Acts by binding PAK4 in a substrate-like manner, inhibiting the protein kinase activity. This chain is PAK4-inhibitor INKA2, found in Homo sapiens (Human).